Here is a 108-residue protein sequence, read N- to C-terminus: Thiosulfate sulfurtransferase GlpE (108 aa).

In terms of domain architecture, Rhodanese spans 17–105; the sequence is VSQSAILVDV…WLREFPQAIT (89 aa). Cys65 acts as the Cysteine persulfide intermediate in catalysis.

The protein belongs to the GlpE family.

It localises to the cytoplasm. It carries out the reaction thiosulfate + hydrogen cyanide = thiocyanate + sulfite + 2 H(+). The catalysed reaction is thiosulfate + [thioredoxin]-dithiol = [thioredoxin]-disulfide + hydrogen sulfide + sulfite + 2 H(+). Its function is as follows. Transferase that catalyzes the transfer of sulfur from thiosulfate to thiophilic acceptors such as cyanide or dithiols. May function in a CysM-independent thiosulfate assimilation pathway by catalyzing the conversion of thiosulfate to sulfite, which can then be used for L-cysteine biosynthesis. The chain is Thiosulfate sulfurtransferase GlpE from Proteus mirabilis (strain HI4320).